We begin with the raw amino-acid sequence, 109 residues long: Cell division protein ZapA (109 aa).

Positions 21-99 (PEQQDALNQA…IEQALLEQGR (79 aa)) form a coiled coil.

Belongs to the ZapA family. Type 1 subfamily. Homodimer. Interacts with FtsZ.

The protein resides in the cytoplasm. Its function is as follows. Activator of cell division through the inhibition of FtsZ GTPase activity, therefore promoting FtsZ assembly into bundles of protofilaments necessary for the formation of the division Z ring. It is recruited early at mid-cell but it is not essential for cell division. The chain is Cell division protein ZapA from Pectobacterium carotovorum subsp. carotovorum (strain PC1).